A 1401-amino-acid polypeptide reads, in one-letter code: Condensin complex subunit 1 (1401 aa).

The interactions with SMC2 and SMC4 stretch occupies residues 1–603; sequence MAPQMYEFHL…TVCKNKPNMS (603 aa). Phosphoserine occurs at positions 20 and 585. Polar residues predominate over residues 576–596; the sequence is STQEKNPRESTGNMVTGQTVC. 3 disordered regions span residues 576 to 611, 956 to 978, and 1303 to 1401; these read STQE…SRGN, REEQ…TTME, and LEIG…RHRS. The span at 956-971 shows a compositional bias: basic and acidic residues; the sequence is REEQEHKTKDPKEKNT. Over residues 1308-1336 the composition is skewed to polar residues; the sequence is AGSQRAPSAKKPSTGSRYQPLASTASDND. Phosphoserine is present on residues Ser1310, Ser1315, and Ser1330. A Phosphothreonine modification is found at Thr1331. Ser1333 is modified (phosphoserine). Thr1339 is modified (phosphothreonine). The short motif at 1342–1362 is the Bipartite nuclear localization signal element; that stretch reads PRRTTRRHPNTQQRASKKKPK. Positions 1345 to 1362 are enriched in basic residues; sequence TTRRHPNTQQRASKKKPK. Phosphoserine occurs at positions 1366, 1367, 1370, 1371, and 1376. Residues 1369 to 1382 show a composition bias toward acidic residues; it reads ESSEEDLSAEMTED. A phosphothreonine; by CDK1 mark is found at Thr1384 and Thr1389. Ser1395 is modified (phosphoserine).

It belongs to the CND1 (condensin subunit 1) family. Component of the condensin complex, which contains the SMC2 and SMC4 heterodimer, and three non SMC subunits that probably regulate the complex: NCAPH/BRRN1, NCAPD2/CAPD2 and NCAPG. Interacts with histones H1 and H3. Phosphorylated by CDK1. Its phosphorylation, as well as that of NCAPH and NCAPG subunits, activates the condensin complex and is required for chromosome condensation.

It is found in the nucleus. The protein localises to the cytoplasm. It localises to the chromosome. Functionally, regulatory subunit of the condensin complex, a complex required for conversion of interphase chromatin into mitotic-like condense chromosomes. The condensin complex probably introduces positive supercoils into relaxed DNA in the presence of type I topoisomerases and converts nicked DNA into positive knotted forms in the presence of type II topoisomerases. May target the condensin complex to DNA via its C-terminal domain. May promote the resolution of double-strand DNA catenanes (intertwines) between sister chromatids. Condensin-mediated compaction likely increases tension in catenated sister chromatids, providing directionality for type II topoisomerase-mediated strand exchanges toward chromatid decatenation. Required for decatenation of non-centromeric ultrafine DNA bridges during anaphase. Early in neurogenesis, may play an essential role to ensure accurate mitotic chromosome condensation in neuron stem cells, ultimately affecting neuron pool and cortex size. The protein is Condensin complex subunit 1 of Homo sapiens (Human).